A 50-amino-acid polypeptide reads, in one-letter code: MPITDPELVAIFEKRVLNKKVCRRCGALNPMSATKCRRCRSKNLRPKKKK.

It belongs to the eukaryotic ribosomal protein eL40 family.

This Aeropyrum pernix (strain ATCC 700893 / DSM 11879 / JCM 9820 / NBRC 100138 / K1) protein is Large ribosomal subunit protein eL40.